The sequence spans 493 residues: Phospholipid transfer protein (493 aa).

Positions 1–17 (MVLLWALFLALLAGAHA) are cleaved as a signal peptide. Asparagine 64, asparagine 91, asparagine 94, asparagine 117, and asparagine 143 each carry an N-linked (GlcNAc...) asparagine glycan. Cysteine 146 and cysteine 185 are joined by a disulfide. N-linked (GlcNAc...) asparagine glycosylation is found at asparagine 245 and asparagine 398.

It belongs to the BPI/LBP/Plunc superfamily. BPI/LBP family. In terms of processing, glycosylation is necessary for secretion and its phospholipid transfer activity. As to expression, highest level expression in the lung, brain and heart with relatively low levels in the liver, skeletal muscle and testis and very low levels found in the spleen and kidney.

Its subcellular location is the secreted. The protein localises to the nucleus. The catalysed reaction is a 1,2-diacyl-sn-glycero-3-phosphocholine(in) = a 1,2-diacyl-sn-glycero-3-phosphocholine(out). It catalyses the reaction a 1,2-diacyl-sn-glycero-3-phosphoethanolamine(in) = a 1,2-diacyl-sn-glycero-3-phosphoethanolamine(out). It carries out the reaction a 1,2-diacyl-sn-glycerol(in) = a 1,2-diacyl-sn-glycerol(out). The enzyme catalyses a 1,2-diacyl-sn-glycero-3-phosphate(in) = a 1,2-diacyl-sn-glycero-3-phosphate(out). The catalysed reaction is a sphingomyelin(in) = a sphingomyelin(out). It catalyses the reaction a 1,2-diacyl-sn-glycero-3-phospho-(1'-sn-glycerol)(in) = a 1,2-diacyl-sn-glycero-3-phospho-(1'-sn-glycerol)(out). It carries out the reaction a 1,2-diacyl-sn-glycero-3-phospho-(1D-myo-inositol)(in) = a 1,2-diacyl-sn-glycero-3-phospho-(1D-myo-inositol)(out). The enzyme catalyses 1-hexadecanoyl-2-(5Z,8Z,11Z,14Z-eicosatetraenoyl)-sn-glycero-3-phosphoethanolamine(in) = 1-hexadecanoyl-2-(5Z,8Z,11Z,14Z-eicosatetraenoyl)-sn-glycero-3-phosphoethanolamine(out). The catalysed reaction is N-(hexadecanoyl)-sphing-4-enine-1-phosphocholine(in) = N-(hexadecanoyl)-sphing-4-enine-1-phosphocholine(out). It catalyses the reaction 1,2-dihexadecanoyl-sn-glycero-3-phosphocholine(in) = 1,2-dihexadecanoyl-sn-glycero-3-phosphocholine(out). Its function is as follows. Mediates the transfer of phospholipids and free cholesterol from triglyceride-rich lipoproteins (low density lipoproteins or LDL and very low density lipoproteins or VLDL) into high-density lipoproteins (HDL) as well as the exchange of phospholipids between triglyceride-rich lipoproteins themselves. Facilitates the transfer of a spectrum of different lipid molecules, including sphingomyelin, phosphatidylcholine, phosphatidylinositol, phosphatidylglycerol, and phosphatidyl ethanolamine. Plays an important role in HDL remodeling which involves modulating the size and composition of HDL. Also plays a key role in the uptake of cholesterol from peripheral cells and tissues that is subsequently transported to the liver for degradation and excretion. Two distinct forms of PLTP exist in plasma: an active form that can transfer phosphatidylcholine from phospholipid vesicles to HDL, and an inactive form that lacks this capability. The polypeptide is Phospholipid transfer protein (Pltp) (Mus musculus (Mouse)).